The primary structure comprises 274 residues: Endonuclease 8-like L720 (274 aa).

The FPG-type; degenerate zinc finger occupies 241–274 (RIYRKSLCPLGHKTIRKKIGLRNRMTTWCPVCQL).

Belongs to the FPG family.

The chain is Endonuclease 8-like L720 from Acanthamoeba polyphaga mimivirus (APMV).